Reading from the N-terminus, the 465-residue chain is GTPase Der (465 aa).

EngA-type G domains lie at 27 to 190 (PVLA…PEAP) and 202 to 375 (RRIA…AGWE). Residues 33–40 (GRPNVGKS), 80–84 (DTGGW), 142–145 (NKVD), 208–215 (GRPNVGKS), 255–259 (DTAGI), and 320–323 (NKWD) contribute to the GTP site. One can recognise a KH-like domain in the interval 376 to 458 (TRVPTGRLNA…PIHISVRVRE (83 aa)).

The protein belongs to the TRAFAC class TrmE-Era-EngA-EngB-Septin-like GTPase superfamily. EngA (Der) GTPase family. In terms of assembly, associates with the 50S ribosomal subunit.

Its function is as follows. GTPase that plays an essential role in the late steps of ribosome biogenesis. The protein is GTPase Der of Streptomyces coelicolor (strain ATCC BAA-471 / A3(2) / M145).